Consider the following 447-residue polypeptide: Methylenetetrahydrofolate--tRNA-(uracil-5-)-methyltransferase TrmFO (447 aa).

13-18 (GAGLAG) is a binding site for FAD.

The protein belongs to the MnmG family. TrmFO subfamily. It depends on FAD as a cofactor.

It localises to the cytoplasm. It carries out the reaction uridine(54) in tRNA + (6R)-5,10-methylene-5,6,7,8-tetrahydrofolate + NADH + H(+) = 5-methyluridine(54) in tRNA + (6S)-5,6,7,8-tetrahydrofolate + NAD(+). The enzyme catalyses uridine(54) in tRNA + (6R)-5,10-methylene-5,6,7,8-tetrahydrofolate + NADPH + H(+) = 5-methyluridine(54) in tRNA + (6S)-5,6,7,8-tetrahydrofolate + NADP(+). In terms of biological role, catalyzes the folate-dependent formation of 5-methyl-uridine at position 54 (M-5-U54) in all tRNAs. This is Methylenetetrahydrofolate--tRNA-(uracil-5-)-methyltransferase TrmFO from Streptococcus thermophilus (strain CNRZ 1066).